A 227-amino-acid polypeptide reads, in one-letter code: Phosphoribosylformylglycinamidine synthase subunit PurQ (227 aa).

A Glutamine amidotransferase type-1 domain is found at 3-225 (FAVIVFPGSN…LKQWRETYVV (223 aa)). The active-site Nucleophile is the C86. Active-site residues include H194 and E196.

As to quaternary structure, part of the FGAM synthase complex composed of 1 PurL, 1 PurQ and 2 PurS subunits.

Its subcellular location is the cytoplasm. It catalyses the reaction N(2)-formyl-N(1)-(5-phospho-beta-D-ribosyl)glycinamide + L-glutamine + ATP + H2O = 2-formamido-N(1)-(5-O-phospho-beta-D-ribosyl)acetamidine + L-glutamate + ADP + phosphate + H(+). The enzyme catalyses L-glutamine + H2O = L-glutamate + NH4(+). The protein operates within purine metabolism; IMP biosynthesis via de novo pathway; 5-amino-1-(5-phospho-D-ribosyl)imidazole from N(2)-formyl-N(1)-(5-phospho-D-ribosyl)glycinamide: step 1/2. Its function is as follows. Part of the phosphoribosylformylglycinamidine synthase complex involved in the purines biosynthetic pathway. Catalyzes the ATP-dependent conversion of formylglycinamide ribonucleotide (FGAR) and glutamine to yield formylglycinamidine ribonucleotide (FGAM) and glutamate. The FGAM synthase complex is composed of three subunits. PurQ produces an ammonia molecule by converting glutamine to glutamate. PurL transfers the ammonia molecule to FGAR to form FGAM in an ATP-dependent manner. PurS interacts with PurQ and PurL and is thought to assist in the transfer of the ammonia molecule from PurQ to PurL. In Bacillus cereus (strain 03BB102), this protein is Phosphoribosylformylglycinamidine synthase subunit PurQ.